Reading from the N-terminus, the 312-residue chain is MARLSEPSPYVEFDRTQWRALRMSTPLKLTEDELVRLRGLGEKIDLLEVEEVYLPLARLIHLQVAARQALFATTAQFLGEPQQNPDRPVPFIIGVAGSVAVGKSTTARVLQALLARWEHHPRVDLVTTDGFLYSNSELSRRNLMHRKGFPESYDRRGLMRFVTAIKSGADAACAPVYSHLLYDIVAGEKQIIEHPDILILEGLNVLQTGPALMVSDLFDFSVYVDARIEDIENWYISRFLSMRAGAFADPASHFHHYSTLTDEQAVFAARDIWHSINRPNLIENILPTRPRATLVLRKDSDHSINRLRLRKL.

97–104 (GSVAVGKS) serves as a coordination point for ATP.

It belongs to the prokaryotic pantothenate kinase family.

The protein localises to the cytoplasm. It carries out the reaction (R)-pantothenate + ATP = (R)-4'-phosphopantothenate + ADP + H(+). It participates in cofactor biosynthesis; coenzyme A biosynthesis; CoA from (R)-pantothenate: step 1/5. The protein is Pantothenate kinase of Mycolicibacterium vanbaalenii (strain DSM 7251 / JCM 13017 / BCRC 16820 / KCTC 9966 / NRRL B-24157 / PYR-1) (Mycobacterium vanbaalenii).